The chain runs to 298 residues: Developmental pluripotency-associated protein 2 (298 aa).

Residues 36-61 (NMEQMEPSVSSTSDVKLEKPKKYNPG) form a disordered region. The 35-residue stretch at 92–126 (INKVCRDTLRDWCQQLGLSTNGKKIEVYLRLHRHA) folds into the SAP domain.

As to quaternary structure, interacts with DPPA4. As to expression, expressed in embryonic stem cells. No expression is seen in 5 months embryo, mesenchymal stem cells, embryonic fibrocytes and adult tissues.

The protein localises to the nucleus. Functionally, binds to target gene promoters, including NKX2-5 and SYCE1, but not GATA4, and may be involved in the maintenance of the active epigenetic status of these genes. The sequence is that of Developmental pluripotency-associated protein 2 (DPPA2) from Homo sapiens (Human).